Consider the following 108-residue polypeptide: Nucleoid-associated protein CHAB381_0200 (108 aa).

This sequence belongs to the YbaB/EbfC family. Homodimer.

It is found in the cytoplasm. The protein localises to the nucleoid. Functionally, binds to DNA and alters its conformation. May be involved in regulation of gene expression, nucleoid organization and DNA protection. The polypeptide is Nucleoid-associated protein CHAB381_0200 (Campylobacter hominis (strain ATCC BAA-381 / DSM 21671 / CCUG 45161 / LMG 19568 / NCTC 13146 / CH001A)).